The sequence spans 265 residues: uncharacterized protein (265 aa).

A Phosphoserine modification is found at serine 223.

This is an uncharacterized protein from Saccharomyces cerevisiae (strain ATCC 204508 / S288c) (Baker's yeast).